Consider the following 352-residue polypeptide: Molybdenum import ATP-binding protein ModC (352 aa).

Positions 1 to 229 (MLELNFSQTL…SVMHPWLPKE (229 aa)) constitute an ABC transporter domain. 31 to 38 (GVSGAGKT) is a binding site for ATP. The Mop domain occupies 289–352 (QTSIRNVLRA…AQVKSVSITA (64 aa)).

This sequence belongs to the ABC transporter superfamily. Molybdate importer (TC 3.A.1.8) family. In terms of assembly, the complex is composed of two ATP-binding proteins (ModC), two transmembrane proteins (ModB) and a solute-binding protein (ModA).

It is found in the cell inner membrane. The catalysed reaction is molybdate(out) + ATP + H2O = molybdate(in) + ADP + phosphate + H(+). In terms of biological role, part of the ABC transporter complex ModABC involved in molybdenum import. Responsible for energy coupling to the transport system. The sequence is that of Molybdenum import ATP-binding protein ModC from Salmonella paratyphi A (strain ATCC 9150 / SARB42).